The primary structure comprises 476 residues: Retinoic acid receptor gamma (476 aa).

Residues 1–109 are modulating; it reads MANSSKERLC…PPPPPRVYKP (109 aa). Residues 81–96 show a composition bias toward low complexity; sequence STVETQSTSSEEMVPS. The disordered stretch occupies residues 81-102; sequence STVETQSTSSEEMVPSSPSPPP. 2 NR C4-type zinc fingers span residues 110 to 130 and 146 to 170; these read CFVC…CEGC and CHRD…LQKC. The nuclear receptor DNA-binding region spans 110–175; the sequence is CFVCNDKSSG…RLQKCFQVGM (66 aa). A hinge region spans residues 176–205; that stretch reads SKEAVRNDRNKKKKEIKEEVVLPDSYEMPP. The Nuclear localization signal signature appears at 184–189; that stretch reads RNKKKK. The 235-residue stretch at 206–440 folds into the NR LBD domain; that stretch reads EMEELIQKVS…PLIREMLENP (235 aa). A disordered region spans residues 435-476; it reads EMLENPEAFEDGAATPKPSERSSSESSNGSPTGEDSSGSKTP. Polar residues predominate over residues 462-476; the sequence is NGSPTGEDSSGSKTP.

The protein belongs to the nuclear hormone receptor family. NR1 subfamily. As to quaternary structure, heterodimer; with a rxr molecule. Binds DNA preferentially as a rar/rxr heterodimer. In terms of tissue distribution, expressed in embryos, tadpoles and various adult tissue such as kidney, testis, brain, liver, skeletal muscle and spleen.

Its subcellular location is the nucleus. Receptor for retinoic acid. Retinoic acid receptors bind as heterodimers to their target response elements in response to their ligands, all-trans or 9-cis retinoic acid, and regulate gene expression in various biological processes. The rar/rxr heterodimers bind to the retinoic acid response elements (RARE) composed of tandem 5'-AGGTCA-3' sites known as DR1-DR5. The chain is Retinoic acid receptor gamma (rarg) from Xenopus laevis (African clawed frog).